The primary structure comprises 101 residues: NAD(P)H-quinone oxidoreductase subunit 4L, chloroplastic (101 aa).

The next 3 membrane-spanning stretches (helical) occupy residues 2–22 (LLEH…YGLI), 32–52 (MCLE…SDFF), and 61–81 (IFSI…SAIV).

Belongs to the complex I subunit 4L family. As to quaternary structure, NDH is composed of at least 16 different subunits, 5 of which are encoded in the nucleus.

The protein localises to the plastid. It localises to the chloroplast thylakoid membrane. The catalysed reaction is a plastoquinone + NADH + (n+1) H(+)(in) = a plastoquinol + NAD(+) + n H(+)(out). The enzyme catalyses a plastoquinone + NADPH + (n+1) H(+)(in) = a plastoquinol + NADP(+) + n H(+)(out). In terms of biological role, NDH shuttles electrons from NAD(P)H:plastoquinone, via FMN and iron-sulfur (Fe-S) centers, to quinones in the photosynthetic chain and possibly in a chloroplast respiratory chain. The immediate electron acceptor for the enzyme in this species is believed to be plastoquinone. Couples the redox reaction to proton translocation, and thus conserves the redox energy in a proton gradient. The sequence is that of NAD(P)H-quinone oxidoreductase subunit 4L, chloroplastic from Carica papaya (Papaya).